A 261-amino-acid chain; its full sequence is Precorrin-6A synthase [deacetylating] (261 aa).

The enzyme catalyses precorrin-5 + S-adenosyl-L-methionine + H2O = precorrin-6A + acetate + S-adenosyl-L-homocysteine + 2 H(+). It participates in cofactor biosynthesis; adenosylcobalamin biosynthesis; cob(II)yrinate a,c-diamide from precorrin-2 (aerobic route): step 5/10. Functionally, catalyzes the methylation of C-1 in precorrin-5 and the subsequent extrusion of acetic acid from the resulting intermediate to form cobalt-precorrin-6A. The polypeptide is Precorrin-6A synthase [deacetylating] (cobF) (Sinorhizobium sp).